The chain runs to 268 residues: Xyloglucan endotransglucosylase protein 7 (268 aa).

Residues 1–196 (MNAEGGNLHR…WTKAPFTASY (196 aa)) enclose the GH16 domain. Glu-82 functions as the Nucleophile in the catalytic mechanism. The active-site Proton donor is Glu-86. Glu-86 contacts xyloglucan. Residue Asn-90 is glycosylated (N-linked (GlcNAc...) asparagine). Residues 99 to 101 (HTN), 109 to 111 (NRE), 175 to 176 (DW), and Gly-180 each bind xyloglucan. Cystine bridges form between Cys-204–Cys-213 and Cys-251–Cys-265. Residue Arg-256 participates in xyloglucan binding.

This sequence belongs to the glycosyl hydrolase 16 family. XTH group 2 subfamily. Contains at least one intrachain disulfide bond essential for its enzymatic activity. In terms of tissue distribution, expressed at a very high level in flowers and stems (picked at anthesis), and at a lower level in ripe leaves and fruits.

It localises to the cytoplasm. It catalyses the reaction breaks a beta-(1-&gt;4) bond in the backbone of a xyloglucan and transfers the xyloglucanyl segment on to O-4 of the non-reducing terminal glucose residue of an acceptor, which can be a xyloglucan or an oligosaccharide of xyloglucan.. In terms of biological role, catalyzes xyloglucan endotransglycosylation (XET). Cleaves and religates xyloglucan polymers. Does not catalyze xyloglucan endohydrolysis (XEH). Probably involved in cell wall assembly and synthesis in fast growing tissues and in the maintenance of firmness in mature fruits. The protein is Xyloglucan endotransglucosylase protein 7 of Diospyros kaki (Kaki persimmon).